The chain runs to 224 residues: LexA repressor (224 aa).

Positions 31–51 form a DNA-binding region, H-T-H motif; the sequence is RAEIAAELGFKSANAAEEHLQ. Catalysis depends on for autocatalytic cleavage activity residues S142 and K179.

Belongs to the peptidase S24 family. In terms of assembly, homodimer.

The enzyme catalyses Hydrolysis of Ala-|-Gly bond in repressor LexA.. Its function is as follows. Represses a number of genes involved in the response to DNA damage (SOS response), including recA and lexA. In the presence of single-stranded DNA, RecA interacts with LexA causing an autocatalytic cleavage which disrupts the DNA-binding part of LexA, leading to derepression of the SOS regulon and eventually DNA repair. The protein is LexA repressor of Acidovorax ebreus (strain TPSY) (Diaphorobacter sp. (strain TPSY)).